A 483-amino-acid chain; its full sequence is Aspartyl/glutamyl-tRNA(Asn/Gln) amidotransferase subunit B (483 aa).

This sequence belongs to the GatB/GatE family. GatB subfamily. Heterotrimer of A, B and C subunits.

It catalyses the reaction L-glutamyl-tRNA(Gln) + L-glutamine + ATP + H2O = L-glutaminyl-tRNA(Gln) + L-glutamate + ADP + phosphate + H(+). The catalysed reaction is L-aspartyl-tRNA(Asn) + L-glutamine + ATP + H2O = L-asparaginyl-tRNA(Asn) + L-glutamate + ADP + phosphate + 2 H(+). Functionally, allows the formation of correctly charged Asn-tRNA(Asn) or Gln-tRNA(Gln) through the transamidation of misacylated Asp-tRNA(Asn) or Glu-tRNA(Gln) in organisms which lack either or both of asparaginyl-tRNA or glutaminyl-tRNA synthetases. The reaction takes place in the presence of glutamine and ATP through an activated phospho-Asp-tRNA(Asn) or phospho-Glu-tRNA(Gln). The chain is Aspartyl/glutamyl-tRNA(Asn/Gln) amidotransferase subunit B from Anaeromyxobacter sp. (strain Fw109-5).